We begin with the raw amino-acid sequence, 668 residues long: COBRA-like protein 11 (668 aa).

The first 29 residues, 1–29, serve as a signal peptide directing secretion; the sequence is MKKLRYVHLNLLLLLLPLINLQFPTLSLA. N-linked (GlcNAc...) asparagine glycans are attached at residues N69, N125, N254, N318, N329, N358, N412, N432, N473, N552, N560, and N579. Residue S636 is the site of GPI-anchor amidated serine attachment. A propeptide spans 637-668 (removed in mature form); that stretch reads SGMRLSGIRFLPSILLAITTFHAITDRLLTGV.

This sequence belongs to the COBRA family. In terms of tissue distribution, mostly expressed in flowers, stamen, anthers and pollen, and, to a lower extent, possibly in roots, stems, leaves and siliques.

The protein resides in the cell membrane. Its function is as follows. Involved in the deposition of apical pectin cap and cellulose microfibrils in pollen tubes. Implicated in pollen tubes growth in the female transmitting tract of pistil and toward micropyles, via the perception of ovule guidance cues. This is COBRA-like protein 11 from Arabidopsis thaliana (Mouse-ear cress).